The following is a 99-amino-acid chain: Cystatin (99 aa).

One can recognise a Cystatin domain in the interval 3–99 (GGLSPRSVSD…EEKLCGFQVW (97 aa)). The Secondary area of contact motif lies at 47 to 51 (QSVAG). An intrachain disulfide couples Cys65 to Cys81.

The protein belongs to the cystatin family. Expressed by the venom gland.

Its subcellular location is the secreted. Inhibits various C1 cysteine proteases including cathepsin L (Ki is 0.1 nM), papain (Ki is 0.19 nM), cathepsin S (Ki is 1.2 nM), and cathepsin B (Ki is 2.5 nM). This protein has no toxic activity and its function in the venom is unknown. It may play a role as housekeeping or regulatory protein. This Naja atra (Chinese cobra) protein is Cystatin.